Here is a 176-residue protein sequence, read N- to C-terminus: UBA-like domain-containing protein 1 (176 aa).

2 stretches are compositionally biased toward low complexity: residues 88-105 (ESFH…TSAT) and 120-137 (TPSW…QHLQ). The interval 88–176 (ESFHSGGSSG…RAHPAMEAER (89 aa)) is disordered. The span at 138 to 150 (PQPPLWTPAPPSP) shows a compositional bias: pro residues. A compositionally biased stretch (basic and acidic residues) spans 166–176 (PRAHPAMEAER).

It belongs to the UBALD family.

This is UBA-like domain-containing protein 1 (Ubald1) from Rattus norvegicus (Rat).